Reading from the N-terminus, the 98-residue chain is MKKMQSIVLALSLVLVAPMAAQAAEITLVPSVKLQIGDRDNRGYYWDGGHWRDHGWWKQHYEWRGNRWHLHGPPPPPRHHKKAPHDHHGGHGPGKHHR.

The signal sequence occupies residues 1 to 23 (MKKMQSIVLALSLVLVAPMAAQA). The disordered stretch occupies residues 68–98 (WHLHGPPPPPRHHKKAPHDHHGGHGPGKHHR). A compositionally biased stretch (basic residues) spans 77-98 (PRHHKKAPHDHHGGHGPGKHHR).

The protein to E.coli YpeC.

This is an uncharacterized protein from Escherichia coli (strain K12).